The primary structure comprises 456 residues: MHRYKKEASSLIKLATPVLIASVAQTGMGFVDTVMAGGVSATDMAAVSVAASIWLPSILFGIGLLMALVPVVAQLNGAGKREQVPFEIQQGAVMALLISIPIIGVLFQTQWILGYMNVDAVMATKTIGYIHAVMFAVPAFLLFQTLRSLTDGLSLTKPAMVIGFIGLLLNIPLNWMFVYGKLGAPALGGVGCGVATAIVYWIMFLLLLLYVTTSQRLRQVQLFTTFHPPQLNAQVKLFKLGFPVAAALFFEVTLFAVVALLVAPLGSTVVAAHQVAINFSSLVFMLPMSIGAATSIRVGHMLGEKSTEGARIASHVGILVGLSTAVFTALLTVILREQIALLYTDNRVVITLAMQLLIFAAIYQCTDAIQVIAAGALRGYKDMRAIFNRTFIAYWLLGLPTGYVLGLTDWIVEPMGAQGFWIGFIVGLSSAAAMLGVRLHWLHRQNDEIQLNYEAR.

12 helical membrane-spanning segments follow: residues 11 to 31 (LIKL…MGFV), 53 to 73 (IWLP…PVVA), 93 to 113 (VMAL…QWIL), 126 to 146 (TIGY…FQTL), 159 to 179 (AMVI…MFVY), 189 to 209 (GVGC…LLLL), 242 to 262 (FPVA…ALLV), 276 to 296 (AINF…ATSI), 315 to 335 (HVGI…TVIL), 356 to 376 (LLIF…AAGA), 391 to 411 (FIAY…TDWI), and 417 to 437 (AQGF…MLGV).

The protein belongs to the multi antimicrobial extrusion (MATE) (TC 2.A.66.1) family.

It is found in the cell inner membrane. In terms of biological role, multidrug efflux pump that functions as a Na(+)/drug antiporter. This Vibrio vulnificus (strain YJ016) protein is Multidrug resistance protein NorM (norM).